A 133-amino-acid polypeptide reads, in one-letter code: ATP synthase epsilon chain (133 aa).

Belongs to the ATPase epsilon chain family. As to quaternary structure, F-type ATPases have 2 components, CF(1) - the catalytic core - and CF(0) - the membrane proton channel. CF(1) has five subunits: alpha(3), beta(3), gamma(1), delta(1), epsilon(1). CF(0) has three main subunits: a, b and c.

It localises to the cell membrane. Produces ATP from ADP in the presence of a proton gradient across the membrane. The chain is ATP synthase epsilon chain (atpC) from Mycoplasma genitalium (strain ATCC 33530 / DSM 19775 / NCTC 10195 / G37) (Mycoplasmoides genitalium).